The sequence spans 1006 residues: Beta-galactosidase (1006 aa).

The N-terminal stretch at 1 to 19 (MKLSSACAIALLAAQAAGA) is a signal peptide. Asparagine 156 is a glycosylation site (N-linked (GlcNAc...) asparagine). Glutamate 200 acts as the Proton donor in catalysis. Glutamate 298 acts as the Nucleophile in catalysis. N-linked (GlcNAc...) asparagine glycosylation is found at asparagine 373, asparagine 402, asparagine 422, asparagine 478, asparagine 522, asparagine 622, asparagine 739, asparagine 760, asparagine 777, and asparagine 805.

The protein belongs to the glycosyl hydrolase 35 family.

It catalyses the reaction Hydrolysis of terminal non-reducing beta-D-galactose residues in beta-D-galactosides.. Cleaves beta-linked terminal galactosyl residues from gangliosides, glycoproteins, and glycosaminoglycans. This Aspergillus niger protein is Beta-galactosidase (lacA).